Consider the following 229-residue polypeptide: Putative N-acetylmannosamine-6-phosphate 2-epimerase (229 aa).

Belongs to the NanE family.

It carries out the reaction an N-acyl-D-glucosamine 6-phosphate = an N-acyl-D-mannosamine 6-phosphate. The protein operates within amino-sugar metabolism; N-acetylneuraminate degradation; D-fructose 6-phosphate from N-acetylneuraminate: step 3/5. Functionally, converts N-acetylmannosamine-6-phosphate (ManNAc-6-P) to N-acetylglucosamine-6-phosphate (GlcNAc-6-P). The protein is Putative N-acetylmannosamine-6-phosphate 2-epimerase of Escherichia coli O157:H7.